The sequence spans 552 residues: Cholesterol oxidase (552 aa).

Residues 1–45 (MTDSRANRADATRGVASVSRRRFLAGAGLTAGAIALSSMSTSASA) constitute a signal peptide (tat-type signal). Tyrosine 66, glycine 67, glutamate 86, glycine 160, asparagine 164, glycine 165, methionine 167, and valine 295 together coordinate FAD. Active-site proton acceptor residues include glutamate 406 and histidine 492. The FAD site is built by glycine 520 and phenylalanine 532.

It belongs to the GMC oxidoreductase family. FAD serves as cofactor. In terms of processing, predicted to be exported by the Tat system. The position of the signal peptide cleavage has been experimentally proven.

It localises to the secreted. The enzyme catalyses cholesterol + O2 = cholest-5-en-3-one + H2O2. It carries out the reaction cholest-5-en-3-one = cholest-4-en-3-one. Its pathway is steroid metabolism; cholesterol degradation. Bifunctional enzyme that catalyzes the oxidation and isomerization of cholesterol to cholestenone (cholest-4-en-3-one), an initial step in the cholesterol degradation process. The chain is Cholesterol oxidase from Brevibacterium sterolicum.